We begin with the raw amino-acid sequence, 97 residues long: Mapk-regulated corepressor-interacting protein 1 (97 aa).

Residues 1–30 (MTSSPVSRVVYNGKRNSSHRSPPNSSEIFT) are disordered. Position 21 is a phosphoserine (Ser-21). Thr-30 carries the post-translational modification Phosphothreonine. Tyr-41 carries the post-translational modification Phosphotyrosine. The segment at 77–97 (TFRPIDLSDLKRRNTQDAKKS) is disordered. The PXDLS motif signature appears at 80 to 84 (PIDLS). The span at 82–97 (DLSDLKRRNTQDAKKS) shows a compositional bias: basic and acidic residues.

The protein belongs to the MCRIP family. Interacts (unphosphorylated form, via the PXDLS motif) with CTBP1, competitively inhibiting CTBP-ZEB1 interaction. Interacts with CTBP2. Interacts with MCRIP2. Interacts with DDX6. Phosphorylation by MAPK3/1 (ERK1/2) regulates MCRIP1 binding to CTBP(s).

The protein localises to the nucleus. The protein resides in the cytoplasm. It is found in the stress granule. Functionally, the phosphorylation status of MCRIP1 functions as a molecular switch to regulate epithelial-mesenchymal transition. Unphosphorylated MCRIP1 binds to and inhibits the transcriptional corepressor CTBP(s). When phosphorylated by MAPK/ERK, MCRIP1 releases CTBP(s) resulting in transcriptional silencing of the E-cadherin gene and induction of epithelial-mesenchymal transition. In Bos taurus (Bovine), this protein is Mapk-regulated corepressor-interacting protein 1 (MCRIP1).